The primary structure comprises 198 residues: uncharacterized protein (198 aa).

Residues 20 to 58 are a coiled coil; the sequence is ERVRRDEELARLSADKEQAKNDLEESKRRIARLRGTVYE. The interval 144 to 198 is disordered; the sequence is LSNRKTKNPESDRRRQSRKKKSTQIQASDEMKHRRHHVHKVHHYSQKQSSSTTRR. Positions 176–188 are enriched in basic residues; sequence HRRHHVHKVHHYS. A compositionally biased stretch (polar residues) spans 189 to 198; that stretch reads QKQSSSTTRR.

It localises to the nucleus. It is found in the nucleolus. This is an uncharacterized protein from Schizosaccharomyces pombe (strain 972 / ATCC 24843) (Fission yeast).